A 227-amino-acid chain; its full sequence is 6,7-dimethyl-8-ribityllumazine synthase, chloroplastic (227 aa).

The transit peptide at 1–71 (MKSLASPPCL…LRSSFVQTAA (71 aa)) directs the protein to the chloroplast. 5-amino-6-(D-ribitylamino)uracil-binding positions include Phe-94, 128–130 (SFE), and 152–154 (AVI). 157–158 (DT) contacts (2S)-2-hydroxy-3-oxobutyl phosphate. The active-site Proton donor is the His-160. A 5-amino-6-(D-ribitylamino)uracil-binding site is contributed by Phe-185. A (2S)-2-hydroxy-3-oxobutyl phosphate-binding site is contributed by Arg-199.

Belongs to the DMRL synthase family. As to quaternary structure, oligomer forming an icosahedral capsid.

The protein resides in the plastid. It is found in the chloroplast. It carries out the reaction (2S)-2-hydroxy-3-oxobutyl phosphate + 5-amino-6-(D-ribitylamino)uracil = 6,7-dimethyl-8-(1-D-ribityl)lumazine + phosphate + 2 H2O + H(+). It participates in cofactor biosynthesis; riboflavin biosynthesis; riboflavin from 2-hydroxy-3-oxobutyl phosphate and 5-amino-6-(D-ribitylamino)uracil: step 1/2. Functionally, catalyzes the formation of 6,7-dimethyl-8-ribityllumazine by condensation of 5-amino-6-(D-ribitylamino)uracil with 3,4-dihydroxy-2-butanone 4-phosphate. This is the penultimate step in the biosynthesis of riboflavin. This Arabidopsis thaliana (Mouse-ear cress) protein is 6,7-dimethyl-8-ribityllumazine synthase, chloroplastic.